A 2061-amino-acid polypeptide reads, in one-letter code: Putative PWWP domain-containing DNA repair factor 4 (2061 aa).

Disordered stretches follow at residues 101-211 (TNLG…SRAR), 382-408 (ALGR…RSSV), 541-586 (TPGT…GDGS), 668-694 (PATL…GDGS), 864-910 (PTPG…SERS), 1046-1072 (PGTM…GDRS), 1159-1182 (ALHG…RGDS), 1205-1383 (KAIA…RDDK), 1521-1548 (PGAL…DSSP), and 1602-1726 (KKGK…KLAN). Basic and acidic residues-rich tracts occupy residues 133–153 (PRED…KREN) and 162–173 (ESKRALRDDRSQ). Over residues 397-408 (TPGTLQGNRSSV) the composition is skewed to polar residues. Positions 1051–1061 (GDSSTARTATA) are enriched in polar residues. Residues 1364–1373 (DSSQVHTTIA) show a composition bias toward polar residues. The segment covering 1639–1648 (LKEETQDSRP) has biased composition (basic and acidic residues). Over residues 1656 to 1665 (PESSPFSGNI) the composition is skewed to polar residues. In terms of domain architecture, PWWP spans 1756–1817 (RGTMVWFKFQ…KHLDCKEKEK (62 aa)).

The protein belongs to the PWWP3A family.

In Homo sapiens (Human), this protein is Putative PWWP domain-containing DNA repair factor 4.